A 744-amino-acid chain; its full sequence is TonB-dependent heme receptor A (744 aa).

The first 24 residues, 1-24 (MNILINKRIFLLVTLVGIQLNVTA), serve as a signal peptide directing secretion. In terms of domain architecture, TBDR plug spans 45–157 (DDSNKLPGRS…FAGTVKFETK (113 aa)). Positions 168–744 (KIGGFLKYGN…NIKFSLSQKF (577 aa)) constitute a TBDR beta-barrel domain.

Belongs to the TonB-dependent receptor family.

It is found in the cell outer membrane. Its function is as follows. Heme receptor. The protein is TonB-dependent heme receptor A (tdhA) of Haemophilus influenzae (strain ATCC 51907 / DSM 11121 / KW20 / Rd).